The following is a 485-amino-acid chain: Probable glycine dehydrogenase (decarboxylating) subunit 2 (485 aa).

Lys273 carries the N6-(pyridoxal phosphate)lysine modification.

It belongs to the GcvP family. C-terminal subunit subfamily. The glycine cleavage system is composed of four proteins: P, T, L and H. In this organism, the P 'protein' is a heterodimer of two subunits. Pyridoxal 5'-phosphate serves as cofactor.

It carries out the reaction N(6)-[(R)-lipoyl]-L-lysyl-[glycine-cleavage complex H protein] + glycine + H(+) = N(6)-[(R)-S(8)-aminomethyldihydrolipoyl]-L-lysyl-[glycine-cleavage complex H protein] + CO2. Its function is as follows. The glycine cleavage system catalyzes the degradation of glycine. The P protein binds the alpha-amino group of glycine through its pyridoxal phosphate cofactor; CO(2) is released and the remaining methylamine moiety is then transferred to the lipoamide cofactor of the H protein. This is Probable glycine dehydrogenase (decarboxylating) subunit 2 from Bacillus licheniformis (strain ATCC 14580 / DSM 13 / JCM 2505 / CCUG 7422 / NBRC 12200 / NCIMB 9375 / NCTC 10341 / NRRL NRS-1264 / Gibson 46).